The following is a 373-amino-acid chain: MPLQPFKTSNLLTMGVELELQLISLSNFDLTAASPDILELLGRSSFPGSFTPEITESMLEIATDVHEEYDQLLKQLFHIRDTLVTVGDRLNIGICGGGTHPFQMWSNQRIFNKTRFIEVSELYGYLTKQFTIFGQHIHIGCEDGNQALFLLHSLNRYIPHFIALSASSPFVQSKDTLYNSARLNSVFAFPLSGRAPFVLNWDEFSLGYFEKMEHTGIVKSMKDFYWDLRPKPEFGTIEMRVCDSPLTVERAAALACYMQALCSYLLENKEPLPHEDDYLVYNYNRFQACRFGLDGTLVHPKTYEQILLREDILTTLRRLKPYANQLNSTMALEHIYEITHKGSDASFLREKYAEHRTLESVVNESLKQFRSSK.

It belongs to the glutamate--cysteine ligase type 2 family. YbdK subfamily.

The enzyme catalyses L-cysteine + L-glutamate + ATP = gamma-L-glutamyl-L-cysteine + ADP + phosphate + H(+). In terms of biological role, ATP-dependent carboxylate-amine ligase which exhibits weak glutamate--cysteine ligase activity. The sequence is that of Putative glutamate--cysteine ligase 2-1 from Legionella pneumophila (strain Paris).